The following is a 241-amino-acid chain: MMMKGTVTHQESFLNRIAESLGRERRKSGVSLPEWKYQPQYQTHAGCTEDDLVTMLKDHCVNIHTELIETDAAGLYDALRTQVNRFEGGPVIIPKDSRFETYGLQTLMTEEWPDEGIPVWEWDAEQGAKNIEKAEQANVGITFSEITLAESATVVLYASEHAGRSVSLLPTTYIAIIPKSSIVPRMTQASDILKQQIRDGVTVPSCINYITGPSNSADIEMDLVVGVHGPVKAAYILVNDR.

It belongs to the LutC/YkgG family.

Is involved in L-lactate degradation and allows cells to grow with lactate as the sole carbon source. The protein is Lactate utilization protein C of Bacillus velezensis (strain DSM 23117 / BGSC 10A6 / LMG 26770 / FZB42) (Bacillus amyloliquefaciens subsp. plantarum).